The following is a 118-amino-acid chain: Aspartate 1-decarboxylase (118 aa).

The Schiff-base intermediate with substrate; via pyruvic acid role is filled by Ser-25. Residue Ser-25 is modified to Pyruvic acid (Ser). Thr-57 serves as a coordination point for substrate. The active-site Proton donor is the Tyr-58. Residue 73 to 75 (GAA) participates in substrate binding.

It belongs to the PanD family. In terms of assembly, heterooctamer of four alpha and four beta subunits. It depends on pyruvate as a cofactor. In terms of processing, is synthesized initially as an inactive proenzyme, which is activated by self-cleavage at a specific serine bond to produce a beta-subunit with a hydroxyl group at its C-terminus and an alpha-subunit with a pyruvoyl group at its N-terminus.

The protein localises to the cytoplasm. It carries out the reaction L-aspartate + H(+) = beta-alanine + CO2. The protein operates within cofactor biosynthesis; (R)-pantothenate biosynthesis; beta-alanine from L-aspartate: step 1/1. Its function is as follows. Catalyzes the pyruvoyl-dependent decarboxylation of aspartate to produce beta-alanine. This Porphyromonas gingivalis (strain ATCC 33277 / DSM 20709 / CIP 103683 / JCM 12257 / NCTC 11834 / 2561) protein is Aspartate 1-decarboxylase.